The chain runs to 463 residues: Lactaldehyde dehydrogenase (463 aa).

Position 220-225 (220-225) interacts with NAD(+); it reads GSSKVG. Catalysis depends on residues glutamate 240 and cysteine 274.

Belongs to the aldehyde dehydrogenase family. As to quaternary structure, homotetramer.

It catalyses the reaction (S)-lactaldehyde + NAD(+) + H2O = (S)-lactate + NADH + 2 H(+). It participates in cofactor biosynthesis; coenzyme F420 biosynthesis. Functionally, involved in F420 biosynthesis through the oxidation of lactaldehyde to lactate. The substrate preference order is propionaldehyde &gt; DL-lactaldehyde, DL-glyceraldehyde &gt; crotonaldehyde &gt; glycolaldehyde &gt; acetaldehyde, acrolein &gt; formaldehyde. No activity was observed towards methylglyoxal or glyceraldehyde-3-phosphate. Has a preference for NAD over NADP. The protein is Lactaldehyde dehydrogenase of Methanocaldococcus jannaschii (strain ATCC 43067 / DSM 2661 / JAL-1 / JCM 10045 / NBRC 100440) (Methanococcus jannaschii).